A 103-amino-acid chain; its full sequence is Large ribosomal subunit protein uL24 (103 aa).

Belongs to the universal ribosomal protein uL24 family. In terms of assembly, part of the 50S ribosomal subunit.

Its function is as follows. One of two assembly initiator proteins, it binds directly to the 5'-end of the 23S rRNA, where it nucleates assembly of the 50S subunit. In terms of biological role, one of the proteins that surrounds the polypeptide exit tunnel on the outside of the subunit. The sequence is that of Large ribosomal subunit protein uL24 from Lacticaseibacillus casei (strain BL23) (Lactobacillus casei).